The chain runs to 546 residues: Choline oxidase (546 aa).

Residues 23–24 (SA), Glu-44, Trp-71, 90–92 (AKV), 96–103 (CSSHNSCI), Ala-232, and Tyr-465 contribute to the FAD site. Residue His-99 is modified to Tele-8alpha-FAD histidine. His-466 functions as the Proton acceptor in the catalytic mechanism. FAD-binding positions include Ala-500 and 510 to 512 (NPN).

This sequence belongs to the GMC oxidoreductase family. As to quaternary structure, homodimer. It depends on FAD as a cofactor.

It carries out the reaction choline + 2 O2 + H2O = glycine betaine + 2 H2O2 + H(+). It functions in the pathway amine and polyamine biosynthesis; betaine biosynthesis via choline pathway; betaine from choline: step 1/1. Functionally, catalyzes the two-step oxidative conversion of choline to glycine-betaine with betaine aldehyde as an intermediate. Glycine-betaine accumulates to high levels in the cytoplasm of cells to prevent dehydration and plasmolysis in adverse hyperosmotic environments. Accepts either choline or the reaction intermediate betaine-aldehyde as substrate. This is Choline oxidase (codA) from Arthrobacter globiformis.